Reading from the N-terminus, the 1141-residue chain is Serine-aspartate repeat-containing protein E (1141 aa).

Residues 1 to 52 form the signal peptide; the sequence is MINRDNKKAITKKGMISNRLNKFSIRKYTVGTASILVGTTLIFGLGNQEAKA. Residues 23 to 34 carry the YSIRK-G/S signaling motif motif; the sequence is FSIRKYTVGTAS. The ligand binding A region stretch occupies residues 53–601; the sequence is AENTSTENAK…GDGTVKPEEK (549 aa). A disordered region spans residues 54 to 248; that stretch reads ENTSTENAKQ…RSTKPVATAP (195 aa). Over residues 61-75 the composition is skewed to basic and acidic residues; sequence AKQDDATTSDNKEVV. The span at 77–90 shows a compositional bias: low complexity; the sequence is ETENNSTTENDSTN. Positions 92–108 are enriched in basic and acidic residues; the sequence is IKKETNTDSQPEAKEES. The span at 109 to 126 shows a compositional bias: low complexity; that stretch reads TTSSTQQQQNNVTATTET. Over residues 130-145 the composition is skewed to basic and acidic residues; sequence NIEKENVKPSTDKTAT. Residues 159-207 are compositionally biased toward polar residues; the sequence is NYTNNDVTTKPSTSEIQTKPTTPQESTNIENSQPQPTPSKVDNQVTDAT. Residues 216–241 show a composition bias toward basic and acidic residues; the sequence is SKEELKNNPEKLKELVRNDNNTDRST. CNA-B domains are found at residues 602–714, 715–824, and 825–935; these read LYKI…YKEP, KYNL…YKTP, and KYSL…EEDT. Positions 929–1117 are disordered; that stretch reads GYFEEDTSDS…GSENNGSNNA (189 aa). Residues 930–1080 show a composition bias toward acidic residues; sequence YFEEDTSDSD…DSDSDSDSDS (151 aa). An LPXTG sorting signal motif is present at residues 1104–1108; that stretch reads LPETG. A Pentaglycyl murein peptidoglycan amidated threonine modification is found at Thr-1107. Residues 1108-1141 constitute a propeptide, removed by sortase; sequence GSENNGSNNATLFGGLFAALGSLLLFGRRKKQNK.

It belongs to the serine-aspartate repeat-containing protein (SDr) family. In terms of assembly, interacts with host complement factor H/CFAH (via C-terminus). Interacts with host complement regulator C4BPA.

The protein resides in the secreted. It is found in the cell wall. In terms of biological role, cell surface-associated calcium-binding protein which plays an important role in adhesion and pathogenesis. Contributes to the resistance to killing by innate immune components in blood and thus attenuates bacterial clearance by interacting with host complement factor H/CFAH and modulating its activity. Inhibits also bacterial opsonization and killing by interacting with host complement regulator C4BPA and thus inhibiting classical complement pathway activation. This is Serine-aspartate repeat-containing protein E (sdrE) from Staphylococcus aureus (strain Mu50 / ATCC 700699).